We begin with the raw amino-acid sequence, 517 residues long: Xyloglucan galactosyltransferase XLT2 (517 aa).

Positions 1–31 (MLPVSNPSSPEHLLKKSRTPDSTTSIDRKNS) are disordered. Over 1 to 49 (MLPVSNPSSPEHLLKKSRTPDSTTSIDRKNSFNSLHSVGNRSSYIAASR) the chain is Cytoplasmic. Residues 20-31 (PDSTTSIDRKNS) show a composition bias toward polar residues. A helical; Signal-anchor for type II membrane protein membrane pass occupies residues 50–70 (SHCTWLILSLLSLQLILFLTL). Residues 71 to 517 (RSIPFPHRHI…KEQEKWYKWR (447 aa)) are Lumenal-facing. N-linked (GlcNAc...) asparagine glycosylation is found at asparagine 250, asparagine 288, asparagine 377, and asparagine 449.

It belongs to the glycosyltransferase 47 family. In terms of assembly, interacts with CSLC4, FUT1, XXT2 and XXT5. As to expression, expressed in roots, hypocotyls, cotyledons, leaves, stems and flowers.

It localises to the golgi apparatus membrane. In terms of biological role, functions in xyloglucan synthesis by adding side chains to the xylosylated glucan backbone. Involved in galactosylating hemicellulose xyloglucan (XyG) at the second position of the XXXG motif to form XLXG. Associates with other xyloglucan-synthesizing enzymes to form multiprotein complexes for xyloglucan synthesis in the Golgi. This chain is Xyloglucan galactosyltransferase XLT2, found in Arabidopsis thaliana (Mouse-ear cress).